A 494-amino-acid chain; its full sequence is Guanosine-5'-triphosphate,3'-diphosphate pyrophosphatase (494 aa).

It belongs to the GppA/Ppx family. GppA subfamily.

It catalyses the reaction guanosine 3'-diphosphate 5'-triphosphate + H2O = guanosine 3',5'-bis(diphosphate) + phosphate + H(+). The protein operates within purine metabolism; ppGpp biosynthesis; ppGpp from GTP: step 2/2. Functionally, catalyzes the conversion of pppGpp to ppGpp. Guanosine pentaphosphate (pppGpp) is a cytoplasmic signaling molecule which together with ppGpp controls the 'stringent response', an adaptive process that allows bacteria to respond to amino acid starvation, resulting in the coordinated regulation of numerous cellular activities. The polypeptide is Guanosine-5'-triphosphate,3'-diphosphate pyrophosphatase (Shigella dysenteriae serotype 1 (strain Sd197)).